The sequence spans 748 residues: WD repeat-containing protein 91 (748 aa).

Residues 183 to 228 are a coiled coil; sequence QRTNQVQEENEVLRQKLFALQAEIHRLKKEEQQQEEEAAALVQHKL. A Phosphoserine modification is found at Ser-257. The span at 266 to 279 shows a compositional bias: low complexity; that stretch reads LLPQSKKSPSRLSP. The tract at residues 266–368 is disordered; that stretch reads LLPQSKKSPS…PEVSGAEAEP (103 aa). Polar residues predominate over residues 284–300; sequence PQAQSSAKKDSFSSQAT. 2 positions are modified to phosphoserine: Ser-289 and Ser-294. A compositionally biased stretch (basic and acidic residues) spans 333-344; sequence RLQDHGKERREL. The span at 345-354 shows a compositional bias: polar residues; it reads LSTSSSQSQC. 7 WD repeats span residues 407 to 446, 449 to 489, 512 to 556, 561 to 600, 603 to 642, 665 to 703, and 710 to 748; these read EHHSSIMHCRVDCSGRRVASLDVDGVIKVWSFNPIMQTKA, ISKS…NLCE, VCSA…QQLQ, PEPIAINCTAFNHNGNLLVTGAADGVIRLFDMQQHECAMS, AHCGEVYSVEFSCDENAVYSIGEDRKFIQWNIHKSGLKVS, VQVPRGRLFAFDSEGNYMLTCSATGGLIYKLGSEEKVLE, and GHRAPVVTVDWSTAMDCGTCLTASMDGKIKLTTLLAHKL.

This sequence belongs to the WD repeat WDR91 family. As to quaternary structure, interacts with WDR81; involved in early to late endosome cargo transport. Interacts with BECN1; negatively regulates the PI3 kinase/PI3K activity associated with endosomal membranes.

It localises to the early endosome membrane. The protein resides in the late endosome membrane. Functions as a negative regulator of the PI3 kinase/PI3K activity associated with endosomal membranes via BECN1, a core subunit of the PI3K complex. By modifying the phosphatidylinositol 3-phosphate/PtdInsP3 content of endosomal membranes may regulate endosome fusion, recycling, sorting and early to late endosome transport. It is for instance, required for the delivery of cargos like BST2/tetherin from early to late endosome and thereby participates indirectly to their degradation by the lysosome. May play a role in meiosis. The sequence is that of WD repeat-containing protein 91 from Mus musculus (Mouse).